Reading from the N-terminus, the 299-residue chain is Probable transport accessory protein MmpS3 (299 aa).

The disordered stretch occupies residues 1–72; sequence MSGPNPPGRE…EHVTGGPYVP (72 aa). A helical membrane pass occupies residues 101–121; that stretch reads VVGVAAIIAAVALVVSVSLLV. A compositionally biased stretch (polar residues) spans 128–139; the sequence is KLATGDTTSSAP. Positions 128–213 are disordered; that stretch reads KLATGDTTSS…TTTTPTGPRQ (86 aa). The span at 150–163 shows a compositional bias: pro residues; it reads PAPPPPPPAPPPTT. Positions 164 to 176 are enriched in low complexity; the sequence is EIPTATETQTVTV. Residues 177-193 are compositionally biased toward pro residues; that stretch reads TPPPPPPPATTTAPPPA.

Belongs to the MmpS family.

The protein localises to the cell membrane. In Mycobacterium tuberculosis (strain CDC 1551 / Oshkosh), this protein is Probable transport accessory protein MmpS3 (mmpS3).